A 245-amino-acid polypeptide reads, in one-letter code: NAD-dependent protein deacetylase (245 aa).

Residues 1–245 (MIFVQQFEEV…EFVEGLSSMK (245 aa)) form the Deacetylase sirtuin-type domain. Residues Ala-26, Thr-30, Phe-37, Arg-38, Gln-105, Ile-107, Asp-108, and His-123 each coordinate NAD(+). Residue Phe-37 participates in nicotinamide binding. Positions 107 and 108 each coordinate nicotinamide. His-123 (proton acceptor) is an active-site residue. The Zn(2+) site is built by Cys-131, Cys-134, Cys-151, and Cys-154. 4 residues coordinate NAD(+): Thr-190, Ser-191, Asn-216, and Ile-234.

It belongs to the sirtuin family. Class U subfamily. Requires Zn(2+) as cofactor.

It is found in the cytoplasm. The enzyme catalyses N(6)-acetyl-L-lysyl-[protein] + NAD(+) + H2O = 2''-O-acetyl-ADP-D-ribose + nicotinamide + L-lysyl-[protein]. Its function is as follows. NAD-dependent protein deacetylase which modulates the activities of several enzymes which are inactive in their acetylated form. The polypeptide is NAD-dependent protein deacetylase (Bacillus cereus (strain ATCC 14579 / DSM 31 / CCUG 7414 / JCM 2152 / NBRC 15305 / NCIMB 9373 / NCTC 2599 / NRRL B-3711)).